A 449-amino-acid polypeptide reads, in one-letter code: MREIISIHIGQAGAQVGNACWELYCLEHGINPDGQMPSDKSVGGGDDAFNTFFSETSSGKHVPRAIYLDLEPTVIDEIRTGTYRQLFHPEQLITGKEDAANNYARGHYTVGKEIVDLCLDRVRKLADQCSGLQGFLVFHSVGGGTGSGFGSLLLERLSVDYGKKSKLDFCVYPSPQVSTAVVEPYNSVLSTHGLLEHTDVAFMLDNEAIYDLCKKSLDIDRPSYANLNRLVAQVISSLTTSLRFDGALNVDINEFQTNLVPYPRIHFMLASYAPVISAEKAFHEQLSVAELTNTVFEPSSMMAKCDPRHGKYMACCLMYRGDVVPKDVTAAVAVIKTKRTIQFVDWCPTGFKCGINYQAPSVVPGGDLAKVQRALCMISNTTAIAEVFSRIDHKFDLMYAKRAFVHWYVGEGMEEGEFSEAREDLAALEKDYEEVGAETVGDDEAEEEM.

Glutamine 11 provides a ligand contact to GTP. The residue at position 40 (lysine 40) is an N6-acetyllysine. Residues glutamate 71, serine 140, glycine 144, threonine 145, threonine 179, asparagine 206, and asparagine 228 each contribute to the GTP site. Mg(2+) is bound at residue glutamate 71. The active site involves glutamate 254.

It belongs to the tubulin family. In terms of assembly, dimer of alpha and beta chains. A typical microtubule is a hollow water-filled tube with an outer diameter of 25 nm and an inner diameter of 15 nM. Alpha-beta heterodimers associate head-to-tail to form protofilaments running lengthwise along the microtubule wall with the beta-tubulin subunit facing the microtubule plus end conferring a structural polarity. Microtubules usually have 13 protofilaments but different protofilament numbers can be found in some organisms and specialized cells. Requires Mg(2+) as cofactor. In terms of processing, acetylation of alpha chains at Lys-40 stabilizes microtubules and affects affinity and processivity of microtubule motors. This modification has a role in multiple cellular functions, ranging from cell motility, cell cycle progression or cell differentiation to intracellular trafficking and signaling.

It is found in the cytoplasm. The protein localises to the cytoskeleton. It localises to the spindle. The protein resides in the nucleus. The catalysed reaction is GTP + H2O = GDP + phosphate + H(+). In terms of biological role, tubulin is the major constituent of microtubules, a cylinder consisting of laterally associated linear protofilaments composed of alpha- and beta-tubulin heterodimers. Microtubules grow by the addition of GTP-tubulin dimers to the microtubule end, where a stabilizing cap forms. Below the cap, tubulin dimers are in GDP-bound state, owing to GTPase activity of alpha-tubulin. This Physarum polycephalum (Slime mold) protein is Tubulin alpha-1B chain (ALTBN).